The primary structure comprises 662 residues: DNA topoisomerase 4 subunit B (662 aa).

ATP-binding positions include tyrosine 20, asparagine 60, aspartate 87, 129-135, and lysine 359; that span reads GLHGVGI. Positions 439 to 553 constitute a Toprim domain; the sequence is TELFIVEGDS…EGHLYLAKPP (115 aa). Residues glutamate 445, aspartate 518, and aspartate 520 each contribute to the Mg(2+) site.

This sequence belongs to the type II topoisomerase family. ParE type 1 subfamily. As to quaternary structure, heterotetramer composed of ParC and ParE. Mg(2+) is required as a cofactor. It depends on Mn(2+) as a cofactor. The cofactor is Ca(2+).

It carries out the reaction ATP-dependent breakage, passage and rejoining of double-stranded DNA.. Its function is as follows. Topoisomerase IV is essential for chromosome segregation. It relaxes supercoiled DNA. Performs the decatenation events required during the replication of a circular DNA molecule. The polypeptide is DNA topoisomerase 4 subunit B (Rickettsia conorii (strain ATCC VR-613 / Malish 7)).